The sequence spans 332 residues: Protoheme IX farnesyltransferase (332 aa).

Helical transmembrane passes span 63 to 83 (LICT…LNCL), 109 to 129 (TVFL…ISGV), 132 to 152 (LAAG…TIIL), 160 to 180 (IVFG…AATG), 188 to 208 (WLFG…AILL), 245 to 265 (ILGV…LLPF), and 286 to 306 (AKGL…LLLI).

It belongs to the UbiA prenyltransferase family. Protoheme IX farnesyltransferase subfamily.

The protein resides in the cell inner membrane. The enzyme catalyses heme b + (2E,6E)-farnesyl diphosphate + H2O = Fe(II)-heme o + diphosphate. Its pathway is porphyrin-containing compound metabolism; heme O biosynthesis; heme O from protoheme: step 1/1. Functionally, converts heme B (protoheme IX) to heme O by substitution of the vinyl group on carbon 2 of heme B porphyrin ring with a hydroxyethyl farnesyl side group. This chain is Protoheme IX farnesyltransferase, found in Prochlorococcus marinus (strain MIT 9515).